Consider the following 354-residue polypeptide: Dihydroorotate dehydrogenase (quinone) (354 aa).

Residues 67–71 and threonine 91 contribute to the FMN site; that span reads AGFDK. Lysine 71 provides a ligand contact to substrate. Position 116-120 (116-120) interacts with substrate; sequence NRMGF. Residues asparagine 144 and asparagine 177 each coordinate FMN. Asparagine 177 is a binding site for substrate. Serine 180 acts as the Nucleophile in catalysis. Asparagine 182 is a substrate binding site. Positions 213 and 241 each coordinate FMN. 242–243 provides a ligand contact to substrate; sequence NT. FMN is bound by residues glycine 265, glycine 294, and 315 to 316; that span reads YT.

Belongs to the dihydroorotate dehydrogenase family. Type 2 subfamily. Monomer. Requires FMN as cofactor.

Its subcellular location is the cell membrane. It carries out the reaction (S)-dihydroorotate + a quinone = orotate + a quinol. The protein operates within pyrimidine metabolism; UMP biosynthesis via de novo pathway; orotate from (S)-dihydroorotate (quinone route): step 1/1. Functionally, catalyzes the conversion of dihydroorotate to orotate with quinone as electron acceptor. The sequence is that of Dihydroorotate dehydrogenase (quinone) from Mycolicibacterium smegmatis (strain ATCC 700084 / mc(2)155) (Mycobacterium smegmatis).